Reading from the N-terminus, the 397-residue chain is MSKIIAVNAGSSTLKFKLYEMPEENVLAEGVIERIALPASHVEIKYGDGKKYEKTTDVKNHEQAIQILLDQLLDLDIIKEYSEINGVGHRVVAGGEYFDKSVVITPDVLKKIESLTELAPLHEPANVLGIKAFKKVLPDIISVAVFDTAFHATLPEKNFLYSLPYEYYEKYSARKYGFHGIGNRYVSQRAAELLGKPAEDLKMIITHLGAGASICPVKNGKSFDTSMGFTPVTGITMATRSGDVDPSLLAYVMEKEGMTDINEMIKVLNTKSGLLGISGVSADMREVEAAQATNPRAKVAREIYVNRIIRYVGAYLAEMGGADAIVFTAGVGENSITIRKEVAEGLNYFGIGVDNEKNDVRGVVRDISAKDSKIKTLLVPTDEELMIVRDVQTLANK.

Residue Asn-8 participates in Mg(2+) binding. Lys-15 contacts ATP. Position 90 (Arg-90) interacts with substrate. The Proton donor/acceptor role is filled by Asp-147. ATP is bound by residues 207–211 (HLGAG), 283–285 (DMR), and 330–334 (GVGEN). Mg(2+) is bound at residue Glu-383.

Belongs to the acetokinase family. As to quaternary structure, homodimer. The cofactor is Mg(2+). Mn(2+) serves as cofactor.

Its subcellular location is the cytoplasm. The enzyme catalyses acetate + ATP = acetyl phosphate + ADP. It participates in metabolic intermediate biosynthesis; acetyl-CoA biosynthesis; acetyl-CoA from acetate: step 1/2. Catalyzes the formation of acetyl phosphate from acetate and ATP. Can also catalyze the reverse reaction. This chain is Acetate kinase, found in Fructilactobacillus sanfranciscensis (Lactobacillus sanfranciscensis).